The following is a 321-amino-acid chain: Methionyl-tRNA formyltransferase (321 aa).

111 to 114 (SLLP) is a (6S)-5,6,7,8-tetrahydrofolate binding site.

It belongs to the Fmt family.

It catalyses the reaction L-methionyl-tRNA(fMet) + (6R)-10-formyltetrahydrofolate = N-formyl-L-methionyl-tRNA(fMet) + (6S)-5,6,7,8-tetrahydrofolate + H(+). In terms of biological role, attaches a formyl group to the free amino group of methionyl-tRNA(fMet). The formyl group appears to play a dual role in the initiator identity of N-formylmethionyl-tRNA by promoting its recognition by IF2 and preventing the misappropriation of this tRNA by the elongation apparatus. The sequence is that of Methionyl-tRNA formyltransferase from Bifidobacterium animalis subsp. lactis (strain AD011).